The primary structure comprises 264 residues: JmjC domain-containing protein 8 (264 aa).

The N-terminal stretch at 1–23 (MAPASRLLALWALAAVALPGSGA) is a signal peptide. N-linked (GlcNAc...) asparagine glycosylation is found at Asn-130, Asn-140, and Asn-209. The region spanning 131-264 (DTLYFFGDNN…TSVFISTFLG (134 aa)) is the JmjC domain.

In terms of assembly, oligomer. Dimer. Interacts with PKM; regulates angiogenesis and metabolism. In terms of processing, N-glycosylated.

It localises to the endoplasmic reticulum lumen. Its subcellular location is the cytoplasm. Functionally, functions as a positive regulator of TNF-induced NF-kappa-B signaling. Regulates angiogenesis and cellular metabolism through interaction with PKM. This chain is JmjC domain-containing protein 8, found in Homo sapiens (Human).